Reading from the N-terminus, the 394-residue chain is Elongation factor Tu (394 aa).

In terms of domain architecture, tr-type G spans 10–204 (KPHVNVGTIG…ALDSYIPEPE (195 aa)). Residues 19 to 26 (GHVDHGKT) are G1. 19-26 (GHVDHGKT) is a binding site for GTP. Threonine 26 is a Mg(2+) binding site. The segment at 60–64 (GITIS) is G2. The segment at 81–84 (DCPG) is G3. Residues 81-85 (DCPGH) and 136-139 (NKCD) each bind GTP. Residues 136-139 (NKCD) are G4. A G5 region spans residues 174–176 (SAL).

This sequence belongs to the TRAFAC class translation factor GTPase superfamily. Classic translation factor GTPase family. EF-Tu/EF-1A subfamily. As to quaternary structure, monomer.

It localises to the cytoplasm. The enzyme catalyses GTP + H2O = GDP + phosphate + H(+). Its function is as follows. GTP hydrolase that promotes the GTP-dependent binding of aminoacyl-tRNA to the A-site of ribosomes during protein biosynthesis. In Pseudoalteromonas atlantica (strain T6c / ATCC BAA-1087), this protein is Elongation factor Tu.